Consider the following 363-residue polypeptide: S-adenosylmethionine:tRNA ribosyltransferase-isomerase (363 aa).

It belongs to the QueA family. In terms of assembly, monomer.

It localises to the cytoplasm. It carries out the reaction 7-aminomethyl-7-carbaguanosine(34) in tRNA + S-adenosyl-L-methionine = epoxyqueuosine(34) in tRNA + adenine + L-methionine + 2 H(+). It participates in tRNA modification; tRNA-queuosine biosynthesis. In terms of biological role, transfers and isomerizes the ribose moiety from AdoMet to the 7-aminomethyl group of 7-deazaguanine (preQ1-tRNA) to give epoxyqueuosine (oQ-tRNA). In Haemophilus influenzae (strain 86-028NP), this protein is S-adenosylmethionine:tRNA ribosyltransferase-isomerase.